The sequence spans 347 residues: Globoside alpha-1,3-N-acetylgalactosaminyltransferase 1 (347 aa).

Residues 1–5 (MHRRR) lie on the Cytoplasmic side of the membrane. Residues 6–26 (LALGLGFCLLAGTSLSVLWVY) traverse the membrane as a helical; Signal-anchor for type II membrane protein segment. Topologically, residues 27 to 347 (LENWLPVSYV…LDKDISCLRS (321 aa)) are lumenal. An N-linked (GlcNAc...) asparagine glycan is attached at Asn-108. Substrate contacts are provided by residues 116–121 (FAVGKY), 206–208 (DVD), and 228–231 (HPSY). Residues Asp-206 and Asp-208 each coordinate Mn(2+). The Nucleophile role is filled by Glu-298.

It belongs to the glycosyltransferase 6 family. Mn(2+) is required as a cofactor. In terms of tissue distribution, widely expressed. Expressed at higher level in placenta, ovary and peripheral blood leukocyte, whereas it is weakly expressed in liver, thymus, and testis. Expressed in bone marrow erythroid cells.

It is found in the golgi apparatus membrane. The protein operates within protein modification; protein glycosylation. Its function is as follows. Has lost the ability to synthesize Forssman glycolipid antigen (FORS1/FG). Might have acquired an alternative function in glycosphingolipid metabolism, but it remains to be established. It appears to have drifted more slowly than confirmed pseudogenes in the glycosyltransferase 6 family, suggesting that it has remained under evolutionary pressure. In Homo sapiens (Human), this protein is Globoside alpha-1,3-N-acetylgalactosaminyltransferase 1.